Consider the following 298-residue polypeptide: Quinolinate synthase (298 aa).

His-19 and Ser-36 together coordinate iminosuccinate. Residue Cys-81 coordinates [4Fe-4S] cluster. Iminosuccinate is bound by residues 107–109 (YVN) and Ser-124. Cys-168 contacts [4Fe-4S] cluster. Iminosuccinate-binding positions include 193 to 195 (HPE) and Thr-210. A [4Fe-4S] cluster-binding site is contributed by Cys-254.

It belongs to the quinolinate synthase family. Type 2 subfamily. [4Fe-4S] cluster serves as cofactor.

It localises to the cytoplasm. The enzyme catalyses iminosuccinate + dihydroxyacetone phosphate = quinolinate + phosphate + 2 H2O + H(+). The protein operates within cofactor biosynthesis; NAD(+) biosynthesis; quinolinate from iminoaspartate: step 1/1. Its activity is regulated as follows. Inhibited by 4,5 dithiohydroxyphthalic acid (DTHPA) analogs, which bind to the catalytic iron site of the [4Fe-4S] cluster. In terms of biological role, catalyzes the condensation of iminoaspartate with dihydroxyacetone phosphate to form quinolinate. The protein is Quinolinate synthase of Thermotoga maritima (strain ATCC 43589 / DSM 3109 / JCM 10099 / NBRC 100826 / MSB8).